Here is a 130-residue protein sequence, read N- to C-terminus: Trypsin inhibitor (130 aa).

The interval 27–49 is disordered; it reads LHKQARQSGSGPSPQGPQQRPPL. Low complexity predominate over residues 32-49; the sequence is RQSGSGPSPQGPQQRPPL.

The protein belongs to the 2S seed storage albumins family. As to quaternary structure, the protein consists of two chains linked by disulfide bonds.

In terms of biological role, inhibits trypsin with a Ki of 7 x 10(-6) M. This Mutarda arvensis (Charlock mustard) protein is Trypsin inhibitor.